We begin with the raw amino-acid sequence, 503 residues long: Aromatase (503 aa).

Transmembrane regions (helical) follow at residues glutamate 19 to tryptophan 39, glycine 51 to glycine 71, and methionine 303 to alanine 323. 2 residues coordinate substrate: aspartate 309 and methionine 374. Heme is bound at residue cysteine 437.

This sequence belongs to the cytochrome P450 family. Heme is required as a cofactor.

The protein localises to the endoplasmic reticulum membrane. The protein resides in the microsome membrane. The catalysed reaction is testosterone + 3 reduced [NADPH--hemoprotein reductase] + 3 O2 = 17beta-estradiol + formate + 3 oxidized [NADPH--hemoprotein reductase] + 4 H2O + 4 H(+). It catalyses the reaction androst-4-ene-3,17-dione + 3 reduced [NADPH--hemoprotein reductase] + 3 O2 = estrone + formate + 3 oxidized [NADPH--hemoprotein reductase] + 4 H2O + 4 H(+). The enzyme catalyses androst-4-ene-3,17-dione + reduced [NADPH--hemoprotein reductase] + O2 = 19-hydroxyandrost-4-ene-3,17-dione + oxidized [NADPH--hemoprotein reductase] + H2O + H(+). It carries out the reaction 19-hydroxyandrost-4-ene-3,17-dione + reduced [NADPH--hemoprotein reductase] + O2 = 19-oxo-androst-4-ene-3,17-dione + oxidized [NADPH--hemoprotein reductase] + 2 H2O + H(+). The catalysed reaction is 19-oxo-androst-4-ene-3,17-dione + reduced [NADPH--hemoprotein reductase] + O2 = estrone + formate + oxidized [NADPH--hemoprotein reductase] + H2O + 2 H(+). It catalyses the reaction estrone + reduced [NADPH--hemoprotein reductase] + O2 = 2-hydroxyestrone + oxidized [NADPH--hemoprotein reductase] + H2O + H(+). The enzyme catalyses 17beta-hydroxy-5alpha-androstan-3-one + reduced [NADPH--hemoprotein reductase] + O2 = 17beta,19-dihydroxy-3-oxo-5alpha-androstanone + oxidized [NADPH--hemoprotein reductase] + H2O + H(+). It carries out the reaction 17beta,19-dihydroxy-3-oxo-5alpha-androstanone + reduced [NADPH--hemoprotein reductase] + O2 = 17beta-hydroxy-3,19-dioxo-5alpha-androstanone + oxidized [NADPH--hemoprotein reductase] + 2 H2O + H(+). The catalysed reaction is 17beta-hydroxy-3,19-dioxo-5alpha-androstanone + reduced [NADPH--hemoprotein reductase] + O2 = 17beta-hydroxy-3-oxo-19-nor-5alpha-androst-1-ene + formate + oxidized [NADPH--hemoprotein reductase] + H2O + 2 H(+). It participates in steroid hormone biosynthesis. A cytochrome P450 monooxygenase that catalyzes the conversion of C19 androgens, androst-4-ene-3,17-dione (androstenedione) and testosterone to the C18 estrogens, estrone and estradiol, respectively. Catalyzes three successive oxidations of C19 androgens: two conventional oxidations at C19 yielding 19-hydroxy and 19-oxo/19-aldehyde derivatives, followed by a third oxidative aromatization step that involves C1-beta hydrogen abstraction combined with cleavage of the C10-C19 bond to yield a phenolic A ring and formic acid. Alternatively, the third oxidative reaction yields a 19-norsteroid and formic acid. Converts dihydrotestosterone to delta1,10-dehydro 19-nordihydrotestosterone and may play a role in homeostasis of this potent androgen. Also displays 2-hydroxylase activity toward estrone. Mechanistically, uses molecular oxygen inserting one oxygen atom into a substrate, and reducing the second into a water molecule, with two electrons provided by NADPH via cytochrome P450 reductase (CPR; NADPH-ferrihemoprotein reductase). This chain is Aromatase (CYP19A1), found in Leucopleurus acutus (Atlantic white-sided dolphin).